Here is a 510-residue protein sequence, read N- to C-terminus: NAD(P)H-quinone oxidoreductase subunit 2, chloroplastic (510 aa).

The next 12 membrane-spanning stretches (helical) occupy residues 24–44 (LLLF…GLIL), 59–79 (WFYF…LFRW), 99–119 (IFQF…VEYI), 124–144 (MAIT…MFLC), 149–169 (LITI…LSGY), 183–203 (YLLM…WLYG), 229–249 (ISIA…PAPF), 295–315 (WHLL…LIAI), 323–343 (MLAY…IVGD), 347–367 (GYAS…GTFA), 395–415 (ALSS…AGFF), and 418–438 (LHLF…IGLL).

This sequence belongs to the complex I subunit 2 family. In terms of assembly, NDH is composed of at least 16 different subunits, 5 of which are encoded in the nucleus.

It is found in the plastid. It localises to the chloroplast thylakoid membrane. The enzyme catalyses a plastoquinone + NADH + (n+1) H(+)(in) = a plastoquinol + NAD(+) + n H(+)(out). It catalyses the reaction a plastoquinone + NADPH + (n+1) H(+)(in) = a plastoquinol + NADP(+) + n H(+)(out). Its function is as follows. NDH shuttles electrons from NAD(P)H:plastoquinone, via FMN and iron-sulfur (Fe-S) centers, to quinones in the photosynthetic chain and possibly in a chloroplast respiratory chain. The immediate electron acceptor for the enzyme in this species is believed to be plastoquinone. Couples the redox reaction to proton translocation, and thus conserves the redox energy in a proton gradient. This chain is NAD(P)H-quinone oxidoreductase subunit 2, chloroplastic, found in Yucca glauca (Soapweed yucca).